A 72-amino-acid chain; its full sequence is Metallothionein-like protein 1B (72 aa).

It belongs to the metallothionein superfamily. Type 15 family. In terms of tissue distribution, expressed in leaves of mature plants.

In terms of biological role, metallothioneins have a high content of cysteine residues that bind various heavy metals. Functions as a metal chelator of nickel (Ni), cadmium (Cd), zinc (Zn) and copper (Cu). Possesses higher affinity for Ni and Cd ions compared to Zn and Cu ions. The polypeptide is Metallothionein-like protein 1B (MT1B) (Oryza sativa subsp. japonica (Rice)).